Reading from the N-terminus, the 200-residue chain is MARANPRRRATAAKDKWKMKEWFVVYAPDFFGSKEIGLTPADEPEKVIGRVVETTLKDLTGDFTKGHVKLYFQVYDVKGQNAYTKFKGHTLARSYIRSLVRRRTTRVDGIFNITTKDGYKLRVMGMVIAYRRIQTSQERAIRRIIQDIIYKKAEELNFADFVLQSVNGQIASEIAKEARKIYPIKRAEIRKIKVLAEPEA.

Belongs to the eukaryotic ribosomal protein eS1 family.

This Thermococcus gammatolerans (strain DSM 15229 / JCM 11827 / EJ3) protein is Small ribosomal subunit protein eS1.